The primary structure comprises 205 residues: Methylthioribulose-1-phosphate dehydratase (205 aa).

Zn(2+) is bound by residues H96 and H98.

The protein belongs to the aldolase class II family. MtnB subfamily. Zn(2+) serves as cofactor.

It carries out the reaction 5-(methylsulfanyl)-D-ribulose 1-phosphate = 5-methylsulfanyl-2,3-dioxopentyl phosphate + H2O. Its pathway is amino-acid biosynthesis; L-methionine biosynthesis via salvage pathway; L-methionine from S-methyl-5-thio-alpha-D-ribose 1-phosphate: step 2/6. In terms of biological role, catalyzes the dehydration of methylthioribulose-1-phosphate (MTRu-1-P) into 2,3-diketo-5-methylthiopentyl-1-phosphate (DK-MTP-1-P). The polypeptide is Methylthioribulose-1-phosphate dehydratase (Exiguobacterium sp. (strain ATCC BAA-1283 / AT1b)).